Consider the following 155-residue polypeptide: Deoxyuridine 5'-triphosphate nucleotidohydrolase (155 aa).

Residues 74–76, N87, and 91–93 each bind substrate; these read RSG and LID.

The protein belongs to the dUTPase family. Requires Mg(2+) as cofactor.

The enzyme catalyses dUTP + H2O = dUMP + diphosphate + H(+). It participates in pyrimidine metabolism; dUMP biosynthesis; dUMP from dCTP (dUTP route): step 2/2. Functionally, this enzyme is involved in nucleotide metabolism: it produces dUMP, the immediate precursor of thymidine nucleotides and it decreases the intracellular concentration of dUTP so that uracil cannot be incorporated into DNA. This is Deoxyuridine 5'-triphosphate nucleotidohydrolase from Xylella fastidiosa (strain M12).